Here is a 418-residue protein sequence, read N- to C-terminus: Serine/threonine transporter SstT (418 aa).

9 consecutive transmembrane segments (helical) span residues serine 16 to proline 36, leucine 45 to valine 65, leucine 83 to phenylalanine 103, alanine 142 to leucine 162, proline 192 to leucine 212, leucine 218 to phenylalanine 238, valine 289 to leucine 309, leucine 317 to alanine 337, and valine 364 to threonine 384.

This sequence belongs to the dicarboxylate/amino acid:cation symporter (DAACS) (TC 2.A.23) family.

The protein localises to the cell inner membrane. The enzyme catalyses L-serine(in) + Na(+)(in) = L-serine(out) + Na(+)(out). It catalyses the reaction L-threonine(in) + Na(+)(in) = L-threonine(out) + Na(+)(out). Its function is as follows. Involved in the import of serine and threonine into the cell, with the concomitant import of sodium (symport system). The protein is Serine/threonine transporter SstT of Tolumonas auensis (strain DSM 9187 / NBRC 110442 / TA 4).